Reading from the N-terminus, the 198-residue chain is dITP/XTP pyrophosphatase (198 aa).

Substrate is bound at residue serine 10–lysine 15. Residues glutamate 43 and aspartate 72 each coordinate Mg(2+). Aspartate 72 acts as the Proton acceptor in catalysis. Substrate is bound by residues serine 73, phenylalanine 154 to aspartate 157, lysine 177, and histidine 182 to arginine 183.

The protein belongs to the HAM1 NTPase family. Homodimer. Mg(2+) serves as cofactor.

It carries out the reaction XTP + H2O = XMP + diphosphate + H(+). The catalysed reaction is dITP + H2O = dIMP + diphosphate + H(+). It catalyses the reaction ITP + H2O = IMP + diphosphate + H(+). Pyrophosphatase that catalyzes the hydrolysis of nucleoside triphosphates to their monophosphate derivatives, with a high preference for the non-canonical purine nucleotides XTP (xanthosine triphosphate), dITP (deoxyinosine triphosphate) and ITP. Seems to function as a house-cleaning enzyme that removes non-canonical purine nucleotides from the nucleotide pool, thus preventing their incorporation into DNA/RNA and avoiding chromosomal lesions. The protein is dITP/XTP pyrophosphatase of Leptospira biflexa serovar Patoc (strain Patoc 1 / Ames).